Reading from the N-terminus, the 484-residue chain is Adenylyltransferase and sulfurtransferase uba4 (484 aa).

Positions 39-49 (AKAQSAAATTA) are enriched in low complexity. The tract at residues 39–58 (AKAQSAAATTAGDNHDKPRR) is disordered. ATP-binding positions include Gly-98, Asp-119, 126 to 130 (SNLHR), Lys-143, and 187 to 188 (DN). Zn(2+) contacts are provided by Cys-236 and Cys-239. Cys-253 functions as the Glycyl thioester intermediate; for adenylyltransferase activity in the catalytic mechanism. Zn(2+) is bound by residues Cys-313 and Cys-316. Residues 370 to 482 (PEKTPTLIDV…WREQVDPEWP (113 aa)) form the Rhodanese domain. The Cysteine persulfide intermediate; for sulfurtransferase activity role is filled by Cys-437.

In the N-terminal section; belongs to the HesA/MoeB/ThiF family. UBA4 subfamily. It depends on Zn(2+) as a cofactor.

The protein localises to the cytoplasm. It localises to the cytosol. It carries out the reaction [molybdopterin-synthase sulfur-carrier protein]-C-terminal Gly-Gly + ATP + H(+) = [molybdopterin-synthase sulfur-carrier protein]-C-terminal Gly-Gly-AMP + diphosphate. The catalysed reaction is [molybdopterin-synthase sulfur-carrier protein]-C-terminal Gly-Gly-AMP + S-sulfanyl-L-cysteinyl-[cysteine desulfurase] + AH2 = [molybdopterin-synthase sulfur-carrier protein]-C-terminal-Gly-aminoethanethioate + L-cysteinyl-[cysteine desulfurase] + A + AMP + 2 H(+). The protein operates within tRNA modification; 5-methoxycarbonylmethyl-2-thiouridine-tRNA biosynthesis. Its pathway is cofactor biosynthesis; molybdopterin biosynthesis. Functionally, plays a central role in 2-thiolation of mcm(5)S(2)U at tRNA wobble positions of cytosolic tRNA(Lys), tRNA(Glu) and tRNA(Gln). Also essential during biosynthesis of the molybdenum cofactor. Acts by mediating the C-terminal thiocarboxylation of sulfur carriers urm1 and mocs2a. Its N-terminus first activates urm1 and mocs2a as acyl-adenylates (-COAMP), then the persulfide sulfur on the catalytic cysteine is transferred to urm1 and mocs2a to form thiocarboxylation (-COSH) of their C-terminus. The reaction probably involves hydrogen sulfide that is generated from the persulfide intermediate and that acts as a nucleophile towards urm1 and mocs2a. Subsequently, a transient disulfide bond is formed. Does not use thiosulfate as sulfur donor; nfs1 probably acting as a sulfur donor for thiocarboxylation reactions. This Aspergillus terreus (strain NIH 2624 / FGSC A1156) protein is Adenylyltransferase and sulfurtransferase uba4.